The sequence spans 411 residues: Arginine deiminase (411 aa).

Cys-401 functions as the Amidino-cysteine intermediate in the catalytic mechanism.

This sequence belongs to the arginine deiminase family.

The protein localises to the cytoplasm. It catalyses the reaction L-arginine + H2O = L-citrulline + NH4(+). The protein operates within amino-acid degradation; L-arginine degradation via ADI pathway; carbamoyl phosphate from L-arginine: step 1/2. This is Arginine deiminase from Staphylococcus aureus (strain bovine RF122 / ET3-1).